A 479-amino-acid chain; its full sequence is Ammonium transporter Rh type C (479 aa).

At 1-9 (MAWNTNLRW) the chain is on the cytoplasmic side. A helical membrane pass occupies residues 10–30 (RLPLTCLLLQVAMVILFGVFV). The Extracellular segment spans residues 31–60 (RYDFDADAHWWTERKHKNLSEVENEFYYRY). Residue Asn-48 is glycosylated (N-linked (GlcNAc...) asparagine). Residues 61-81 (PSFQDVHVMVFVGFGFLMTFL) traverse the membrane as a helical segment. The Cytoplasmic portion of the chain corresponds to 82–85 (QRYG). A helical transmembrane segment spans residues 86-106 (FSAVGFNFLLAAFGIQWALLM). The Extracellular portion of the chain corresponds to 107–123 (QGWFHFLEGRYIVVGVE). The chain crosses the membrane as a helical span at residues 124–144 (NLINADFCVASVCVAFGAVLG). Residues 145–148 (KVSP) lie on the Cytoplasmic side of the membrane. Residues 149-169 (IQLLIMTFFQVTLFAVNEFIL) traverse the membrane as a helical segment. Residues 170–177 (LNLLKVKD) lie on the Extracellular side of the membrane. A helical transmembrane segment spans residues 178-200 (AGGSMTIHTFYAYFELTVTRILY). At 201-218 (RRNLEQSKERQSSAYQSD) the chain is on the cytoplasmic side. The helical transmembrane segment at 219 to 239 (LFAMIGTLFLWMYWPSFNSAI) threads the bilayer. Residues 240-250 (SYHGDSQHRAA) lie on the Extracellular side of the membrane. A helical membrane pass occupies residues 251–271 (INTYCSLAACVLTSVAVSSAL). Over 272–281 (HKKGKLDMVH) the chain is Cytoplasmic. A helical membrane pass occupies residues 282 to 302 (IQNATLAGGVAVGTTAEMMLM). Pro-303 is a topological domain (extracellular). A helical membrane pass occupies residues 304-324 (YGALIIGFICGIISTLGFVYL). Residues 325–345 (TPFLESRLHIQDTCGINNLHG) lie on the Cytoplasmic side of the membrane. A helical membrane pass occupies residues 346–366 (IPGIIGGIVGAVTAASASLEV). Topologically, residues 367–394 (YGKEGLVHSFDFQDFKRDWTARTQGKFQ) are extracellular. The chain crosses the membrane as a helical span at residues 395-415 (IYGLLVTLAMALMGGIIVGLI). At 416-479 (LRLPFWGQPS…PMASSVPLVP (64 aa)) the chain is on the cytoplasmic side.

Belongs to the ammonium transporter (TC 2.A.49) family. Rh subfamily. In terms of assembly, homotrimer. In terms of processing, N-glycosylated.

It localises to the apical cell membrane. It catalyses the reaction NH4(+)(in) = NH4(+)(out). It carries out the reaction methylamine(out) = methylamine(in). The enzyme catalyses CO2(out) = CO2(in). Functionally, ammonium transporter involved in the maintenance of acid-base homeostasis. Transports ammonium and its related derivative methylammonium across the plasma membrane of epithelial cells likely contributing to renal transepithelial ammonia transport and ammonia metabolism. Postulated to primarily mediate an electroneutral bidirectional transport of NH3 ammonia species according to a mechanism that implies interaction of an NH4(+) ion with acidic residues of the pore entry followed by dissociation of NH4(+) into NH3 and H(+). As a result NH3 transits through the central pore and is protonated on the extracellular side reforming NH4(+). May act as a CO2 channel providing for renal acid secretion. This chain is Ammonium transporter Rh type C (RHCG), found in Macaca mulatta (Rhesus macaque).